A 1356-amino-acid chain; its full sequence is Transmembrane protein 94 (1356 aa).

Over 1 to 64 (MDLKEKHLGE…FLHHSNRCSC (64 aa)) the chain is Cytoplasmic. Residues 65-85 (FHWPGASLMLLAVLLLLGCCG) form a helical membrane-spanning segment. The Lumenal segment spans residues 86–92 (GQPAGSR). The chain crosses the membrane as a helical span at residues 93–113 (GVGLVNASALFLLLLLNLVLI). The Cytoplasmic portion of the chain corresponds to 114–273 (GRQDRLKRRE…RPVTALDNER (160 aa)). S221 and S225 each carry phosphoserine. Residues 274 to 294 (FTVQSVMLHYAVPVVLAGFLI) form a helical membrane-spanning segment. Residues 295–320 (TNALRFIFSAPGVTSWQYTLLQLQVN) lie on the Lumenal side of the membrane. The chain crosses the membrane as a helical span at residues 321-341 (GVLPILPLLFPVLWVLATACG). Topologically, residues 342–1092 (EARVLAQMSK…RHATYGIRKC (751 aa)) are cytoplasmic. The DKQGIL motif lies at 417–422 (DKQGIL). Disordered stretches follow at residues 439-461 (VEPP…FCHP) and 483-541 (EQER…ESDP). Positions 440-449 (EPPHSSHEDL) are enriched in basic and acidic residues. A phosphoserine mark is found at S444, S445, and S454. The segment covering 502 to 511 (HHKAHGRSKH) has biased composition (basic residues). Phosphoserine occurs at positions 513, 518, 798, and 941. Residues 1093–1113 (FLFLLQCQLTLVVIQFLSCLV) traverse the membrane as a helical segment. Over 1114-1120 (QLPPLLS) the chain is Lumenal. A helical membrane pass occupies residues 1121 to 1141 (TTDILWLSCFCYPLLSISLLG). Residues 1142–1167 (KPPHSSIMSMATGKNLQSIPKKTQHY) lie on the Cytoplasmic side of the membrane. A helical transmembrane segment spans residues 1168–1188 (FLLCFLLKFSLTISSCLICFG). At 1189-1228 (FTLQSFCDSSRDRNLTNCSSVMLPSNDDRAPAWFEDFANG) the chain is on the lumenal side. N1202 and N1205 each carry an N-linked (GlcNAc...) asparagine glycan. A helical transmembrane segment spans residues 1229-1249 (LLSAQKLTAALIVLHTVFISI). Over 1250-1261 (THVHRTKPLWRK) the chain is Cytoplasmic. The helical transmembrane segment at 1262–1282 (SPLTNLWWAVTVPVVLLGQVV) threads the bilayer. Topologically, residues 1283 to 1306 (QTAVDLQLWTHRDSHVHFGLEDVP) are lumenal. A helical transmembrane segment spans residues 1307–1327 (LLTWLLGCLSLVLVVVTNEIV). The Cytoplasmic portion of the chain corresponds to 1328–1356 (KLHEIRVRVRYQKRQKLQFETKLGMNSPF). Residues 1351 to 1353 (GMN) carry the GMN; metal-binding motif motif.

As to quaternary structure, forms homooligomers. As to expression, expressed ubiquitously.

The protein localises to the endoplasmic reticulum membrane. Its function is as follows. Could function in the uptake of Mg(2+) from the cytosol into the endoplasmic reticulum and regulate intracellular Mg(2+) homeostasis. This Homo sapiens (Human) protein is Transmembrane protein 94.